The sequence spans 408 residues: tRNA pseudouridine synthase D (408 aa).

The Nucleophile role is filled by D82. In terms of domain architecture, TRUD spans 157–367 (GVPNRFGEQR…MEGERRPLRV (211 aa)).

It belongs to the pseudouridine synthase TruD family.

The enzyme catalyses uridine(13) in tRNA = pseudouridine(13) in tRNA. In terms of biological role, responsible for synthesis of pseudouridine from uracil-13 in transfer RNAs. This Geobacter sulfurreducens (strain ATCC 51573 / DSM 12127 / PCA) protein is tRNA pseudouridine synthase D.